Consider the following 70-residue polypeptide: Probable ferredoxin TA0517 (70 aa).

2 consecutive 4Fe-4S ferredoxin-type domains span residues 8 to 36 (TEMD…WLDE) and 37 to 66 (TVIK…AEWF). Positions 17, 20, 23, 27, 46, 49, 52, and 56 each coordinate [4Fe-4S] cluster.

[4Fe-4S] cluster serves as cofactor.

Its function is as follows. Ferredoxins are iron-sulfur proteins that transfer electrons in a wide variety of metabolic reactions. This Thermoplasma acidophilum (strain ATCC 25905 / DSM 1728 / JCM 9062 / NBRC 15155 / AMRC-C165) protein is Probable ferredoxin TA0517.